Consider the following 500-residue polypeptide: Protein ASPARTIC PROTEASE IN GUARD CELL 1 (500 aa).

The first 24 residues, 1–24, serve as a signal peptide directing secretion; sequence MAFPRFLSLLAVVTLSLFLTTTDA. Residues 162 to 496 enclose the Peptidase A1 domain; that stretch reads YFSRIGVGTP…DLSKNVIGLS (335 aa). The active site involves Asp-180. 6 disulfides stabilise this stretch: Cys-190-Cys-193, Cys-196-Cys-271, Cys-217-Cys-235, Cys-222-Cys-230, Cys-307-Cys-500, and Cys-419-Cys-461. The active site involves Asp-379.

It belongs to the peptidase A1 family. Expressed in young seedlings, leaves, guard-cells, stems, flowers and siliques, but not in roots or mesophyll cells.

It is found in the endoplasmic reticulum. With respect to regulation, inhibited by pepstatin A. Aspartic protease involved in drought avoidance through abscisic acid signaling. This is Protein ASPARTIC PROTEASE IN GUARD CELL 1 (ASPG1) from Arabidopsis thaliana (Mouse-ear cress).